The chain runs to 104 residues: uncharacterized protein (104 aa).

Residues C81–V97 form a helical membrane-spanning segment.

It is found in the cell membrane. This is an uncharacterized protein from Bacillus subtilis (strain 168).